The following is a 244-amino-acid chain: tRNA pseudouridine synthase A (244 aa).

Catalysis depends on Asp55, which acts as the Nucleophile. Tyr113 serves as a coordination point for substrate.

This sequence belongs to the tRNA pseudouridine synthase TruA family. In terms of assembly, homodimer.

The enzyme catalyses uridine(38/39/40) in tRNA = pseudouridine(38/39/40) in tRNA. Formation of pseudouridine at positions 38, 39 and 40 in the anticodon stem and loop of transfer RNAs. The protein is tRNA pseudouridine synthase A of Phytoplasma mali (strain AT).